The chain runs to 125 residues: Fluoride-specific ion channel FluC (125 aa).

4 helical membrane passes run 5–25 (ILAI…LALW), 37–57 (LAAN…FHLL), 71–91 (GFLG…TMLL), and 97–117 (VALL…WLGI). The Na(+) site is built by G74 and T77.

The protein belongs to the fluoride channel Fluc/FEX (TC 1.A.43) family.

The protein resides in the cell inner membrane. The catalysed reaction is fluoride(in) = fluoride(out). With respect to regulation, na(+) is not transported, but it plays an essential structural role and its presence is essential for fluoride channel function. Functionally, fluoride-specific ion channel. Important for reducing fluoride concentration in the cell, thus reducing its toxicity. This Variovorax paradoxus (strain S110) protein is Fluoride-specific ion channel FluC.